Here is a 716-residue protein sequence, read N- to C-terminus: Astellifadiene synthase (716 aa).

The interval M1–F323 is terpene cyclase. D92 lines the Mg(2+) pocket. Residues D92, R179–D182, N223, S227–E231, and R316–Y317 contribute to the substrate site. Residues D92–D96 carry the DDXXD 1 motif. The NSE/DTE motif lies at N223 to E231. Residues S324–L713 form a prenyltransferase region. Isopentenyl diphosphate is bound by residues K436, R439, and H468. Positions 475 and 479 each coordinate Mg(2+). The DDXXD 2 motif lies at D475–D479. R484 contacts dimethylallyl diphosphate. R485 is a binding site for isopentenyl diphosphate. Residues K562, T563, Q598, N605, K615, and K625 each contribute to the dimethylallyl diphosphate site.

The protein in the N-terminal section; belongs to the terpene synthase family. In the C-terminal section; belongs to the FPP/GGPP synthase family. Hexamer. Requires Mg(2+) as cofactor.

The catalysed reaction is isopentenyl diphosphate + (2E,6E)-farnesyl diphosphate = (2E,6E,10E)-geranylgeranyl diphosphate + diphosphate. The enzyme catalyses isopentenyl diphosphate + (2E,6E,10E)-geranylgeranyl diphosphate = (2E,6E,10E,14E)-geranylfarnesyl diphosphate + diphosphate. It carries out the reaction (2E,6E,10E,14E)-geranylfarnesyl diphosphate = astellifadiene + diphosphate. It functions in the pathway secondary metabolite biosynthesis; terpenoid biosynthesis. In terms of biological role, bifunctional terpene synthase that converts dimethylallyl diphosphate (DMAPP) and isopentenyl diphosphate (IPP) into astellifadiene. The C-terminal prenyltransferase (PT) domain of EvAS catalyzes formation of geranylfarnesyl pyrophosphate (GFPP), whereas the N-terminal terpene cyclase (TC) domain catalyzes the cyclization of GFPP to astellifadiene. The polypeptide is Astellifadiene synthase (Emericella variicolor (Aspergillus stellatus)).